The primary structure comprises 325 residues: Acetyl-coenzyme A carboxylase carboxyl transferase subunit alpha (325 aa).

Residues 35 to 292 enclose the CoA carboxyltransferase C-terminal domain; the sequence is EIEKLEARLA…DRVLRRSLKQ (258 aa).

The protein belongs to the AccA family. As to quaternary structure, acetyl-CoA carboxylase is a heterohexamer composed of biotin carboxyl carrier protein (AccB), biotin carboxylase (AccC) and two subunits each of ACCase subunit alpha (AccA) and ACCase subunit beta (AccD).

The protein localises to the cytoplasm. The enzyme catalyses N(6)-carboxybiotinyl-L-lysyl-[protein] + acetyl-CoA = N(6)-biotinyl-L-lysyl-[protein] + malonyl-CoA. Its pathway is lipid metabolism; malonyl-CoA biosynthesis; malonyl-CoA from acetyl-CoA: step 1/1. Functionally, component of the acetyl coenzyme A carboxylase (ACC) complex. First, biotin carboxylase catalyzes the carboxylation of biotin on its carrier protein (BCCP) and then the CO(2) group is transferred by the carboxyltransferase to acetyl-CoA to form malonyl-CoA. The sequence is that of Acetyl-coenzyme A carboxylase carboxyl transferase subunit alpha from Geobacillus kaustophilus (strain HTA426).